Here is a 139-residue protein sequence, read N- to C-terminus: Acidic phospholipase A2 BpPLA2-TXI (139 aa).

A signal peptide spans Met-1–Gly-16. Cys-44 and Cys-60 form a disulfide bridge. 2 residues coordinate Ca(2+): Gly-45 and Gly-47. His-63 is an active-site residue. Asp-64 serves as a coordination point for Ca(2+). 3 disulfide bridges follow: Cys-65-Cys-139, Cys-73-Cys-97, and Cys-91-Cys-102.

Belongs to the phospholipase A2 family. Group II subfamily. D49 sub-subfamily. Requires Ca(2+) as cofactor. In terms of tissue distribution, expressed by the venom gland.

It localises to the secreted. It catalyses the reaction a 1,2-diacyl-sn-glycero-3-phosphocholine + H2O = a 1-acyl-sn-glycero-3-phosphocholine + a fatty acid + H(+). Functionally, PLA2 catalyzes the calcium-dependent hydrolysis of the 2-acyl groups in 3-sn-phosphoglycerides. The chain is Acidic phospholipase A2 BpPLA2-TXI from Bothrops pauloensis (Neuwied's lancehead).